Reading from the N-terminus, the 355-residue chain is METLKDKTLQELEELQNDSEAIDQLALESPEVQDLQLEREMALATNRSLAERNLEFQGPLEISRSNLSDKYQELRKLVERCQEQKAKLEKFSSALQPGTLLDLLQVEGMKIEGESEAMAEKFLEGEVPLETFLENFSSMRMLSHLRRVRVEKLQEVVRKPRASQELAGDAPPPRPPPPVRPVPQGTPPVVEEQPQPPSAMPPYPLPYSLSPSLPVGSTAHGALPPAPFPVVSQPSFYSGPLGPTYPAAQPGPRGAAGYSWSPQRSTPPRPGYPGTPTGASGPGYPLAGGRALSPGYPQQSPYPATGGKPPYPIQPQLPSFPGQPQPSVPLQPPYPPGPAPPYGFPPPPGPAWPGY.

Position 29 is a phosphoserine (serine 29). One can recognise a VPS37 C-terminal domain in the interval 78-167; that stretch reads VERCQEQKAK…RKPRASQELA (90 aa). The disordered stretch occupies residues 159-355; sequence KPRASQELAG…PPPGPAWPGY (197 aa). Pro residues-rich tracts occupy residues 170–186 and 194–205; these read APPPRPPPPVRPVPQGT and PQPPSAMPPYPL. A compositionally biased stretch (low complexity) spans 246–257; the sequence is PAAQPGPRGAAG. Residues 321-355 show a composition bias toward pro residues; the sequence is PGQPQPSVPLQPPYPPGPAPPYGFPPPPGPAWPGY.

The protein belongs to the VPS37 family. As to quaternary structure, component of the ESCRT-I complex (endosomal sorting complex required for transport I) which consists of TSG101, VPS28, a VPS37 protein (VPS37A to -D) and MVB12A or MVB12B in a 1:1:1:1 stoichiometry. Interacts with TSG101, VPS28, MVB12A and MVB12B. Component of the ESCRT-I complex (endosomal sorting complex required for transport I) which consists of TSG101, VPS28, a VPS37 protein (VPS37A to -D) and UBAP1 in a 1:1:1:1 stoichiometry. Interacts with HGS and STAM2. Interacts with CEP55. Post-translationally, phosphorylated by TBK1.

It localises to the late endosome membrane. Component of the ESCRT-I complex, a regulator of vesicular trafficking process. Required for the sorting of endocytic ubiquitinated cargos into multivesicular bodies. May be involved in cell growth and differentiation. In Pongo abelii (Sumatran orangutan), this protein is Vacuolar protein sorting-associated protein 37C (VPS37C).